A 369-amino-acid chain; its full sequence is MIKQFAVSLLLVLLTLVTTTASAERIRDLTTVQGVRENALIGYGLVVGLDGTGDQTTQTPFTTQSLSNMLSQLGITVPPGTNMQLKNVAAVMVTAKLPPFGRAGQNIDVVVSSLGNAKSLRGGTLLMTPLKGVDNQVYALAQGNILVGGAGASAGGSSVKVNQLAGGRISNGAVIERELPTQFGENGVLNLQLNNEDFSLAQQISDTINRTDGTGTATPLDARTVQLRMPRDKSAQVKFLSHVQNLTVRVDVGDAKVIVNSRTGSVVMNRNVMLDSCAVAQGNLSVIVDNQVVVSQPNTPLAGGSTVVTRNPAVAVREQNGALQQVNASASLSQVIQALNALGATPNDLMSILQAMESAGCLRAKLEII.

The first 23 residues, 1–23, serve as a signal peptide directing secretion; sequence MIKQFAVSLLLVLLTLVTTTASA.

The protein belongs to the FlgI family. In terms of assembly, the basal body constitutes a major portion of the flagellar organelle and consists of four rings (L,P,S, and M) mounted on a central rod.

The protein resides in the periplasm. The protein localises to the bacterial flagellum basal body. In terms of biological role, assembles around the rod to form the L-ring and probably protects the motor/basal body from shearing forces during rotation. The sequence is that of Flagellar P-ring protein from Photorhabdus laumondii subsp. laumondii (strain DSM 15139 / CIP 105565 / TT01) (Photorhabdus luminescens subsp. laumondii).